The chain runs to 644 residues: Complement component C1q receptor (644 aa).

An N-terminal signal peptide occupies residues 1 to 22 (MAISTGLFLLLGLLGQPWAGAA). Topologically, residues 23-572 (ADSQAVVCEG…SAHSDTDGQN (550 aa)) are extracellular. In terms of domain architecture, C-type lectin spans 31-173 (EGTACYTAHW…CGTPEAPGNS (143 aa)). Residue N102 is glycosylated (N-linked (GlcNAc...) asparagine). 16 cysteine pairs are disulfide-bonded: C140-C164, C261-C272, C268-C282, C284-C297, C303-C314, C308-C325, C327-C340, C346-C355, C351-C364, C366-C380, C386-C397, C393-C406, C408-C422, C428-C440, C436-C449, and C451-C464. 2 consecutive EGF-like domains span residues 257–298 (PKFG…VTCA) and 299–341 (SRNP…VHCV). A glycan (N-linked (GlcNAc...) asparagine) is linked at N322. An EGF-like 3; calcium-binding domain is found at 342–381 (DIDECQDSPCAQDCVNTLGSFHCECWVGYQPSGPKEEACE). The EGF-like 4; calcium-binding domain occupies 382-423 (DVDECAAANSPCAQGCINTDGSFYCSCKEGYIVSGEDSTQCE). The region spanning 424 to 465 (DIDECSDARGNPCDSLCFNTDGSFRCGCPPGWELAPNGVFCS) is the EGF-like 5; calcium-binding domain. Positions 473–508 (LPARPPQKEDNDDRKESTMPPTEMPSSPSGSKDVSN) are disordered. Basic and acidic residues predominate over residues 478–489 (PQKEDNDDRKES). Residues 490–501 (TMPPTEMPSSPS) show a composition bias toward low complexity. The helical transmembrane segment at 573–593 (LLLFYILGTVVAISLLLVLAL) threads the bilayer. Over 594 to 644 (GILIYHKRRAKKEEIKEKKPQNAADSYSWVPERAESQAPENQYSPTPGTDC) the chain is Cytoplasmic. The interval 605–644 (KEEIKEKKPQNAADSYSWVPERAESQAPENQYSPTPGTDC) is disordered. Position 619 is a phosphoserine (S619). 2 positions are modified to phosphotyrosine: Y620 and Y636. Polar residues predominate over residues 631–644 (APENQYSPTPGTDC).

As to quaternary structure, homodimer. Interacts with C1QBP; the association may represent a cell surface C1q receptor. Interacts with surfactant protein A/SFTPA1. Interacts with multimerin-2/MMRN2. Interacts with DAG1; this interaction plays an important role in endothelial cell migration. Interacts with CBL. Interacts with IGFBP7. Interacts with VEGFR2. N- and O-glycosylated. In terms of processing, phosphorylated on Tyr-620 and Tyr-636 by SRC; these phosphorylations promote endothelial cell adhesion and migration. As to expression, expressed in lung, heart and bone marrow. Expressed at lower level in ovary, whole embryo and fetal liver. Not detected in brain, adult liver or thymus. Highly expressed in peritoneal cavity and bone marrow macrophages. Not detected in epithelial cells.

It is found in the cell membrane. Functionally, cell surface receptor that plays a role in various physiological processes including inflammation, phagocytosis, and cell adhesion. Plays a role in phagocytosis and enhances the uptake of apoptotic cells and immune complexes by acting as a receptor for defense collagens including surfactant protein A/SFTPA1, C1q, and mannose-binding lectin (MBL2). Plays a role in the regulation of endothelial cell function and adhesion by activating angiogenesis. Mechanistically, exerts its angiogenic function by associating with beta-dystroglycan, leading to SRC-dependent phosphorylation and subsequent recruitment of CBL. In turn, CBL provides a docking site for downstream signaling components, such as CRKL to enhance cell migration. Participates in angiogenesis also by acting as a receptor for the ECM pan-endothelial glycoprotein multimerin-2/MMRN2 and IGFBP7 ligands. Both ligands play a non-redundant role in CD93-mediated endothelial cell function. Acts as a key regulator of endothelial barrier function through modulating VEGFR2 function. The sequence is that of Complement component C1q receptor (Cd93) from Mus musculus (Mouse).